A 248-amino-acid polypeptide reads, in one-letter code: Metallo-beta-lactamase type 2 (248 aa).

Positions 1–21 are cleaved as a signal peptide; that stretch reads MKGLKGLLVLALGFTGLQVFG. Positions 97, 99, 101, 160, and 179 each coordinate Zn(2+). Residue K182 coordinates substrate. H221 is a binding site for Zn(2+).

It belongs to the metallo-beta-lactamase superfamily. Class-B beta-lactamase family. As to quaternary structure, monomer. Requires Zn(2+) as cofactor.

The protein resides in the periplasm. The enzyme catalyses a beta-lactam + H2O = a substituted beta-amino acid. Confers resistance to the different beta-lactams antibiotics (penicillin, cephalosporin and carbapenem) via the hydrolysis of the beta-lactam ring. The polypeptide is Metallo-beta-lactamase type 2 (blaB8) (Elizabethkingia meningoseptica (Chryseobacterium meningosepticum)).